We begin with the raw amino-acid sequence, 268 residues long: Norsolorinic acid ketoreductase nor1 (268 aa).

NADP(+)-binding residues include Ile-32, Asp-79, Asn-108, Tyr-182, Lys-186, Val-213, and Thr-215. The Proton donor role is filled by Tyr-182. The Lowers pKa of active site Tyr role is filled by Lys-186.

The protein belongs to the short-chain dehydrogenases/reductases (SDR) family.

The protein resides in the cytoplasm. It is found in the cytosol. It localises to the vacuole. The enzyme catalyses (1'S)-averantin + NADP(+) = norsolorinic acid + NADPH + H(+). It functions in the pathway mycotoxin biosynthesis. In terms of biological role, norsolorinic acid ketoreductase; part of the fragmented gene cluster that mediates the biosynthesis of dothistromin (DOTH), a polyketide toxin very similar in structure to the aflatoxin precursor, versicolorin B. The first step of the pathway is the conversion of acetate to norsolorinic acid (NOR) and requires the fatty acid synthase subunits hexA and hexB, as well as the polyketide synthase pksA. PksA combines a hexanoyl starter unit and 7 malonyl-CoA extender units to synthesize the precursor NOR. The hexanoyl starter unit is provided to the acyl-carrier protein (ACP) domain by the fungal fatty acid synthase hexA/hexB. The second step is the conversion of NOR to averantin (AVN) and requires the norsolorinic acid ketoreductase nor1, which catalyzes the dehydration of norsolorinic acid to form (1'S)-averantin. The cytochrome P450 monooxygenase avnA then catalyzes the hydroxylation of AVN to 5'hydroxyaverantin (HAVN). The next step is performed by adhA that transforms HAVN to averufin (AVF). Averufin might then be converted to hydroxyversicolorone by cypX and avfA. Hydroxyversicolorone is further converted versiconal hemiacetal acetate (VHA) by moxY. VHA is then the substrate for the versiconal hemiacetal acetate esterase est1 to yield versiconal (VAL). Versicolorin B synthase vbsA then converts VAL to versicolorin B (VERB) by closing the bisfuran ring. Then, the activity of the versicolorin B desaturase verB leads to versicolorin A (VERA). DotB, a predicted chloroperoxidase, may perform epoxidation of the A-ring of VERA. Alternatively, a cytochrome P450, such as cypX or avnA could catalyze this step. It is also possible that another, uncharacterized, cytochrome P450 enzyme is responsible for this step. Opening of the epoxide could potentially be achieved by the epoxide hydrolase epoA. However, epoA seems not to be required for DOTH biosynthesis, but other epoxide hydrolases may have the ability to complement this hydrolysis. Alternatively, opening of the epoxide ring could be achieved non-enzymatically. The next step is the deoxygenation of ring A to yield the 5,8-dihydroxyanthraquinone which is most likely catalyzed by the NADPH dehydrogenase encoded by ver1. The last stages of DOTH biosynthesis are proposed to involve hydroxylation of the bisfuran. OrdB and norB might have oxidative roles here. An alternative possibility is that cytochrome P450 monoogenases such as avnA and cypX might perform these steps in addition to previously proposed steps. The sequence is that of Norsolorinic acid ketoreductase nor1 from Dothistroma septosporum (strain NZE10 / CBS 128990) (Red band needle blight fungus).